The chain runs to 517 residues: T-box transcription factor TBX22 (517 aa).

The tract at residues 1–83 (MALSSRAHAF…SDESNSQESL (83 aa)) is disordered. Over residues 35–45 (LQEEQFVEEGE) the composition is skewed to acidic residues. Residues 46–66 (EILRSPSRDSQQPEKRLKAES) show a composition bias toward basic and acidic residues. The segment covering 74–83 (SDESNSQESL) has biased composition (low complexity). Residues 93–280 (LQGSDLWKRF…RNPFAKGFRD (188 aa)) constitute a DNA-binding region (T-box). Positions 312–333 (TQSGSSGSSPVTSSGGAPSPLN) are disordered. Low complexity predominate over residues 314–333 (SGSSGSSPVTSSGGAPSPLN).

Its subcellular location is the nucleus. Functionally, probable transcriptional regulator involved in developmental processes. This is major determinant crucial to palatogenesis. This Mus musculus (Mouse) protein is T-box transcription factor TBX22 (Tbx22).